The following is a 2038-amino-acid chain: Non-reducing polyketide synthase ZEA1 (2038 aa).

Positions 9-246 are N-terminal acylcarrier protein transacylase domain (SAT); sequence LLFGDQTDSW…NELNIHALQH (238 aa). Residues 364-794 form the Ketosynthase family 3 (KS3) domain; it reads PGRIAIVGMA…GGNACILLED (431 aa). Residues cysteine 537, histidine 672, and histidine 711 each act as for beta-ketoacyl synthase activity in the active site. The malonyl-CoA:ACP transacylase (MAT) domain stretch occupies residues 888–1172; sequence VFVFTGQGSH…VCSSFVRATL (285 aa). The active-site For acyl/malonyl transferase activity is serine 979. The interval 1221 to 1572 is product template (PT) domain; that stretch reads SLLNLPTYAW…HFHEVENAVL (352 aa). The segment at 1254 to 1405 is N-terminal hotdog fold; it reads HETFKANIST…GQLIQARWDK (152 aa). The PKS/mFAS DH domain maps to 1254–1573; that stretch reads HETFKANIST…FHEVENAVLD (320 aa). Positions 1425–1573 are C-terminal hotdog fold; sequence ISHRLQPQIL…FHEVENAVLD (149 aa). Residues 1616-1693 enclose the Carrier domain; the sequence is QSDAHVLDSI…DLRRVFAPKS (78 aa). Serine 1653 carries the post-translational modification O-(pantetheine 4'-phosphoryl)serine. Residues 1700-1738 are disordered; the sequence is NDLSRPSLVDDTSQALQSSGSESFDQPPTSVTSTSDSGS. Residues 1709 to 1737 are compositionally biased toward polar residues; the sequence is DDTSQALQSSGSESFDQPPTSVTSTSDSG. The thioesterase (TE) domain stretch occupies residues 1778–1882; that stretch reads TGTIATYIHL…PRSKTVEDKN (105 aa). The active-site For thioesterase activity is the histidine 2021.

The protein operates within mycotoxin biosynthesis. Functionally, non-reducing polyketide synthase; part of the gene cluster that mediates the biosynthesis of zearalenone (ZEA), a nonsteroid estrogen that is a contaminant of cereal grains and causes estrogenic disorders in humans and animals. The ZEA backbone is synthesized from a single acetyl-CoA molecule and eight malonyl-CoA molecules. The reducing polyketide synthase ZEA2 is proposed to synthesize a reduced hexaketide intermediate by using different combinations of its reductive domains during each round of condensation. The hexaketide thioester is then transacylated to the non-reducing polyketide synthase ZEA1 and is further condensed with three malonyl-CoAs without reductive tailoring to yield a mixed reduced/unreduced nonaketide. ZEA1 must be able to interact with ZEA2 to facilitate starter-unit acyltransfer and initiate polyketide biosynthesis. ZEA1 also mediates the required C2-C7 cyclization to form the resorcylate core and catalyzes the formation of the macrolactone. ZEA1 exhibits broad starter-unit specificities toward fatty acyl-CoAs ranging in sizes between C6 and C16 and displays the highest activity toward decanoyl-CoA. ZEB1 is then responsible for the chemical conversion of beta-zearalenonol (beta-ZOL) to ZEA in the biosynthetic pathway. The protein is Non-reducing polyketide synthase ZEA1 of Gibberella zeae (strain ATCC MYA-4620 / CBS 123657 / FGSC 9075 / NRRL 31084 / PH-1) (Wheat head blight fungus).